A 534-amino-acid polypeptide reads, in one-letter code: Lysophosphatidylcholine acyltransferase 1 (534 aa).

The segment at 1-25 (MRLRGRGPRAAPSSSSGAGDARRLA) is disordered. The Cytoplasmic portion of the chain corresponds to 1–57 (MRLRGRGPRAAPSSSSGAGDARRLAPPGRNPFVHELRLSALQKAQVAFMTLTLFPIR). Over residues 8 to 19 (PRAAPSSSSGAG) the composition is skewed to low complexity. Residues 58-78 (LLFAAFMMLLAWPFALVASLG) traverse the membrane as a helical; Signal-anchor for type II membrane protein segment. Over 79–534 (PPDKEPEQPL…GRKNSCKKVD (456 aa)) the chain is Lumenal. The HXXXXD motif motif lies at 135–140 (HSSYFD). EF-hand domains lie at 379 to 414 (PVSD…VCRP) and 451 to 486 (ISEL…YPDF). Ca(2+) contacts are provided by aspartate 392, serine 394, glutamate 398, and glutamate 403. The Di-lysine motif motif lies at 531 to 534 (KKVD).

Belongs to the 1-acyl-sn-glycerol-3-phosphate acyltransferase family. In terms of tissue distribution, enriched in alveolar type II cells of lung. Also highly expressed in stomach.

The protein localises to the endoplasmic reticulum membrane. It is found in the golgi apparatus membrane. The protein resides in the cell membrane. Its subcellular location is the lipid droplet. The catalysed reaction is a 1-acyl-sn-glycero-3-phosphocholine + an acyl-CoA = a 1,2-diacyl-sn-glycero-3-phosphocholine + CoA. It carries out the reaction a 1-O-alkyl-sn-glycero-3-phosphocholine + acetyl-CoA = a 1-O-alkyl-2-acetyl-sn-glycero-3-phosphocholine + CoA. It catalyses the reaction a 1-acyl-sn-glycero-3-phosphate + an acyl-CoA = a 1,2-diacyl-sn-glycero-3-phosphate + CoA. The enzyme catalyses a 1-O-(1Z-alkenyl)-sn-glycero-3-phosphocholine + an acyl-CoA = a 1-O-(1Z-alkenyl)-2-acyl-sn-glycero-3-phosphocholine + CoA. The catalysed reaction is 1-acyl-sn-glycero-3-phospho-(1'-sn-glycerol) + an acyl-CoA = a 1,2-diacyl-sn-glycero-3-phospho-(1'-sn-glycerol) + CoA. It carries out the reaction a 1-acyl-sn-glycero-3-phosphocholine + hexadecanoyl-CoA = 1-acyl-2-hexadecanoyl-sn-glycero-3-phosphocholine + CoA. It catalyses the reaction a 1-acyl-sn-glycero-3-phosphate + hexadecanoyl-CoA = 1-acyl-2-hexadecanoyl-sn-glycero-3-phosphate + CoA. The enzyme catalyses 1-acyl-sn-glycero-3-phospho-(1'-sn-glycerol) + hexadecanoyl-CoA = 1-acyl-2-hexadecanoyl-sn-glycero-3-phospho-(1'-sn-glycerol) + CoA. The catalysed reaction is 1-hexadecanoyl-sn-glycero-3-phosphocholine + hexadecanoyl-CoA = 1,2-dihexadecanoyl-sn-glycero-3-phosphocholine + CoA. It carries out the reaction 1-O-hexadecyl-sn-glycero-3-phosphocholine + hexadecanoyl-CoA = 1-O-hexadecyl-2-hexadecanoyl-sn-glycero-3-phosphocholine + CoA. It catalyses the reaction a 1-O-(1Z-alkenyl)-sn-glycero-3-phosphocholine + hexadecanoyl-CoA = 1-O-(1Z)-alkenyl-2-hexadecanoyl-sn-glycero-3-phosphocholine + CoA. The enzyme catalyses 1-hexadecanoyl-sn-glycero-3-phospho-(1'-sn-glycerol) + hexadecanoyl-CoA = 1,2-dihexadecanoyl-sn-glycero-3-phospho-(1'-sn-glycerol) + CoA. The catalysed reaction is 1-dodecanoyl-sn-glycero-3-phosphocholine + hexadecanoyl-CoA = 1-dodecanoyl-2-hexadecanoyl-sn-glycero-3-phosphocholine + CoA. It carries out the reaction 1-tetradecanoyl-sn-glycero-3-phosphocholine + hexadecanoyl-CoA = 1-tetradecanoyl-2-hexadecanoyl-sn-glycero-3-phosphocholine + CoA. It catalyses the reaction 1-O-octadecyl-sn-glycero-3-phosphocholine + hexadecanoyl-CoA = 1-O-octadecyl-2-hexadecanoyl-sn-glycero-3-phosphocholine + CoA. The enzyme catalyses 1-octadecanoyl-sn-glycero-3-phosphocholine + hexadecanoyl-CoA = 1-octadecanoyl-2-hexadecanoyl-sn-glycero-3-phosphocholine + CoA. The catalysed reaction is 1-(9Z-octadecenoyl)-sn-glycero-3-phosphocholine + hexadecanoyl-CoA = 1-(9Z-octadecenoyl)-2-hexadecanoyl-sn-glycero-3-phosphocholine + CoA. It carries out the reaction 1-eicosanoyl-sn-glycero-3-phosphocholine + hexadecanoyl-CoA = 1-eicosanoyl-2-hexadecanoyl-sn-glycero-3-phosphocholine + CoA. It catalyses the reaction hexanoyl-CoA + 1-hexadecanoyl-sn-glycero-3-phosphocholine = 1-hexadecanoyl-2-hexanoyl-sn-glycero-3-phosphocholine + CoA. The enzyme catalyses octanoyl-CoA + 1-hexadecanoyl-sn-glycero-3-phosphocholine = 1-hexadecanoyl-2-octanoyl-sn-glycero-3-phosphocholine + CoA. The catalysed reaction is decanoyl-CoA + 1-hexadecanoyl-sn-glycero-3-phosphocholine = 1-hexadecanoyl-2-decanoyl-sn-glycero-3-phosphocholine + CoA. It carries out the reaction dodecanoyl-CoA + 1-hexadecanoyl-sn-glycero-3-phosphocholine = 1-hexadecanoyl-2-dodecanoyl-sn-glycero-3-phosphocholine + CoA. It catalyses the reaction tetradecanoyl-CoA + 1-hexadecanoyl-sn-glycero-3-phosphocholine = 1-hexadecanoyl-2-tetradecanoyl-sn-glycero-3-phosphocholine + CoA. The enzyme catalyses 1-hexadecanoyl-sn-glycero-3-phosphocholine + (9Z)-octadecenoyl-CoA = 1-hexadecanoyl-2-(9Z-octadecenoyl)-sn-glycero-3-phosphocholine + CoA. The catalysed reaction is (9Z,12Z)-octadecadienoyl-CoA + 1-hexadecanoyl-sn-glycero-3-phosphocholine = 1-hexadecanoyl-2-(9Z,12Z-octadecadienoyl)-sn-glycero-3-phosphocholine + CoA. It carries out the reaction (4Z,7Z,10Z,13Z,16Z,19Z)-docosahexaenoyl-CoA + 1-hexadecanoyl-sn-glycero-3-phosphocholine = 1-hexadecanoyl-2-(4Z,7Z,10Z,13Z,16Z,19Z-docosahexaenoyl)-sn-glycero-3-phosphocholine + CoA. It catalyses the reaction 1-hexadecanoyl-sn-glycero-3-phosphocholine + acetyl-CoA = 1-hexadecanoyl-2-acetyl-sn-glycero-3-phosphocholine + CoA. The enzyme catalyses eicosanoyl-CoA + 1-hexadecanoyl-sn-glycero-3-phosphocholine = 1-hexadecanoyl-2-eicosanoyl-sn-glycero-3-phosphocholine + CoA. The catalysed reaction is 1-O-hexadecyl-sn-glycero-3-phosphocholine + acetyl-CoA = 1-O-hexadecyl-2-acetyl-sn-glycero-3-phosphocholine + CoA. It participates in lipid metabolism; phospholipid metabolism. Its activity is regulated as follows. Activity is stimulated by Mg(2+) or Mn(2+). Exhibits acyltransferase activity. Exhibits acetyltransferase activity. Activity is calcium-independent. Catalyzes the conversion of lysophosphatidylcholine (1-acyl-sn-glycero-3-phosphocholine or LPC) into phosphatidylcholine (1,2-diacyl-sn-glycero-3-phosphocholine or PC). Catalyzes the conversion 1-acyl-sn-glycerol-3-phosphate (lysophosphatidic acid or LPA) into 1,2-diacyl-sn-glycerol-3-phosphate (phosphatidic acid or PA) by incorporating an acyl moiety at the sn-2 position of the glycerol backbone. Displays a clear preference for saturated fatty acyl-CoAs, and 1-myristoyl or 1-palmitoyl LPC as acyl donors and acceptors, respectively. Involved in platelet-activating factor (PAF) biosynthesis by catalyzing the conversion of the PAF precursor, 1-O-alkyl-sn-glycero-3-phosphocholine (lyso-PAF) into 1-O-alkyl-2-acetyl-sn-glycero-3-phosphocholine (PAF). May synthesize phosphatidylcholine in pulmonary surfactant, thereby playing a pivotal role in respiratory physiology. Involved in the regulation of lipid droplet number and size. This chain is Lysophosphatidylcholine acyltransferase 1 (Lpcat1), found in Rattus norvegicus (Rat).